We begin with the raw amino-acid sequence, 407 residues long: Multifunctional CCA protein (407 aa).

The ATP site is built by G8 and R11. Residues G8 and R11 each coordinate CTP. Mg(2+) contacts are provided by D21 and D23. Residues R91, R137, and R140 each contribute to the ATP site. Residues R91, R137, and R140 each contribute to the CTP site. The HD domain occupies 228–329 (TGIHTLMVAQ…IKIFDKMDVW (102 aa)).

It belongs to the tRNA nucleotidyltransferase/poly(A) polymerase family. Bacterial CCA-adding enzyme type 1 subfamily. Monomer. Can also form homodimers and oligomers. The cofactor is Mg(2+). It depends on Ni(2+) as a cofactor.

The enzyme catalyses a tRNA precursor + 2 CTP + ATP = a tRNA with a 3' CCA end + 3 diphosphate. The catalysed reaction is a tRNA with a 3' CCA end + 2 CTP + ATP = a tRNA with a 3' CCACCA end + 3 diphosphate. Functionally, catalyzes the addition and repair of the essential 3'-terminal CCA sequence in tRNAs without using a nucleic acid template. Adds these three nucleotides in the order of C, C, and A to the tRNA nucleotide-73, using CTP and ATP as substrates and producing inorganic pyrophosphate. tRNA 3'-terminal CCA addition is required both for tRNA processing and repair. Also involved in tRNA surveillance by mediating tandem CCA addition to generate a CCACCA at the 3' terminus of unstable tRNAs. While stable tRNAs receive only 3'-terminal CCA, unstable tRNAs are marked with CCACCA and rapidly degraded. This is Multifunctional CCA protein from Aliivibrio fischeri (strain ATCC 700601 / ES114) (Vibrio fischeri).